A 55-amino-acid chain; its full sequence is Large ribosomal subunit protein bL33 (55 aa).

The protein belongs to the bacterial ribosomal protein bL33 family.

The sequence is that of Large ribosomal subunit protein bL33 from Hyphomonas neptunium (strain ATCC 15444).